The chain runs to 262 residues: MAPKGKKVAPAPLATKSAKSSESKNPLFESTPKNFGIGQSIQPKRNLSRFVKWPEYVRLQRQKKILSLRLKVPPSIAQFSQTLDKNTAAQAFKLLNKYRPETSAEKKERLTKEAAAIAEGKTAKDVSPKPVVVKYGLNHVVSLIENKKAKLVLIANDVDPIELVVFLPALCKKMGVPYAIVKGKARLGTLVHKKTSAVAALTEVNSADEAELSKLISTINANYIEKYEENRKHWGGGIMGSKANDKIAKKAKAAAAAVSTSN.

Residues 1–36 (MAPKGKKVAPAPLATKSAKSSESKNPLFESTPKNFG) form a disordered region.

Belongs to the eukaryotic ribosomal protein eL8 family. As to quaternary structure, component of the large ribosomal subunit. Mature ribosomes consist of a small (40S) and a large (60S) subunit. The 40S subunit contains about 32 different proteins and 1 molecule of RNA (18S). The 60S subunit contains 45 different proteins and 3 molecules of RNA (25S, 5.8S and 5S).

The protein localises to the cytoplasm. In terms of biological role, component of the ribosome, a large ribonucleoprotein complex responsible for the synthesis of proteins in the cell. The small ribosomal subunit (SSU) binds messenger RNAs (mRNAs) and translates the encoded message by selecting cognate aminoacyl-transfer RNA (tRNA) molecules. The large subunit (LSU) contains the ribosomal catalytic site termed the peptidyl transferase center (PTC), which catalyzes the formation of peptide bonds, thereby polymerizing the amino acids delivered by tRNAs into a polypeptide chain. The nascent polypeptides leave the ribosome through a tunnel in the LSU and interact with protein factors that function in enzymatic processing, targeting, and the membrane insertion of nascent chains at the exit of the ribosomal tunnel. The protein is Large ribosomal subunit protein eL8B of Candida albicans (strain SC5314 / ATCC MYA-2876) (Yeast).